Here is a 106-residue protein sequence, read N- to C-terminus: Large ribosomal subunit protein eL36 (106 aa).

Over residues 75–93 (VRQEKVGHSQESKEEERGD) the composition is skewed to basic and acidic residues. The tract at residues 75 to 106 (VRQEKVGHSQESKEEERGDVQCSPPDEGWWWY) is disordered.

It belongs to the eukaryotic ribosomal protein eL36 family.

This is Large ribosomal subunit protein eL36 (RPL36) from Daucus carota (Wild carrot).